The following is a 242-amino-acid chain: Large ribosomal subunit protein uL2 (242 aa).

Residues 201–242 are disordered; it reads VDHPFGGGRHQHTGKPTTVSRKKVPPGRKVGHISARRTGVRK. Residues 220–242 show a composition bias toward basic residues; the sequence is SRKKVPPGRKVGHISARRTGVRK.

It belongs to the universal ribosomal protein uL2 family. As to quaternary structure, part of the 50S ribosomal subunit. Forms a bridge to the 30S subunit in the 70S ribosome.

Its function is as follows. One of the primary rRNA binding proteins. Required for association of the 30S and 50S subunits to form the 70S ribosome, for tRNA binding and peptide bond formation. It has been suggested to have peptidyltransferase activity; this is somewhat controversial. Makes several contacts with the 16S rRNA in the 70S ribosome. The sequence is that of Large ribosomal subunit protein uL2 from Methanocaldococcus jannaschii (strain ATCC 43067 / DSM 2661 / JAL-1 / JCM 10045 / NBRC 100440) (Methanococcus jannaschii).